The chain runs to 646 residues: Serine/threonine-protein kinase sck2 (646 aa).

Disordered stretches follow at residues 17-85 (VSTN…LPEV) and 143-176 (GRDIGTSSRDSANVSRSSSMMSSHPIPTPAIQRT). The span at 68 to 80 (SDQSTVGNRNSND) shows a compositional bias: polar residues. Residues 149–165 (SSRDSANVSRSSSMMSS) are compositionally biased toward low complexity. The 262-residue stretch at 266 to 527 (FVPLKLIGKG…VEEVMKHPFF (262 aa)) folds into the Protein kinase domain. ATP is bound by residues 272–280 (IGKGTFGQV) and K295. The Proton acceptor role is filled by D392. The AGC-kinase C-terminal domain maps to 528-605 (DGIDWKKLAA…IDASAMDEAF (78 aa)). Positions 609 to 646 (NSNDSASSISSQDDYSKDNSDMDLNRANDEVFMGQIDP) are disordered. The segment covering 610 to 621 (SNDSASSISSQD) has biased composition (low complexity). The span at 622–637 (DYSKDNSDMDLNRAND) shows a compositional bias: basic and acidic residues.

The protein belongs to the protein kinase superfamily. AGC Ser/Thr protein kinase family. PKC subfamily.

The catalysed reaction is L-seryl-[protein] + ATP = O-phospho-L-seryl-[protein] + ADP + H(+). It carries out the reaction L-threonyl-[protein] + ATP = O-phospho-L-threonyl-[protein] + ADP + H(+). In terms of biological role, protein kinase that is part of growth control pathway which is at least partially redundant with the cAMP pathway. The protein is Serine/threonine-protein kinase sck2 (sck2) of Schizosaccharomyces pombe (strain 972 / ATCC 24843) (Fission yeast).